A 208-amino-acid chain; its full sequence is Nitrate/nitrite response regulator protein homolog (208 aa).

The region spanning 6–122 is the Response regulatory domain; it reads KVLLIDDHPL…TLLEQIKRIA (117 aa). D57 carries the post-translational modification 4-aspartylphosphate. Residues 142–207 enclose the HTH luxR-type domain; the sequence is EDNPLDSLTD…AATVLFFEQN (66 aa). Positions 166–185 form a DNA-binding region, H-T-H motif; sequence NKQIAAQLFISEETVKVHIR.

Functionally, could activate the expression of a formate dehydrogenase operon and could repress the transcription of the fumarate reductase (frdABCD) operon. The polypeptide is Nitrate/nitrite response regulator protein homolog (narP) (Haemophilus influenzae (strain ATCC 51907 / DSM 11121 / KW20 / Rd)).